The primary structure comprises 255 residues: 5-oxoprolinase subunit A (255 aa).

It belongs to the LamB/PxpA family. As to quaternary structure, forms a complex composed of PxpA, PxpB and PxpC.

It catalyses the reaction 5-oxo-L-proline + ATP + 2 H2O = L-glutamate + ADP + phosphate + H(+). Its function is as follows. Catalyzes the cleavage of 5-oxoproline to form L-glutamate coupled to the hydrolysis of ATP to ADP and inorganic phosphate. This Rhodopseudomonas palustris (strain BisA53) protein is 5-oxoprolinase subunit A.